The primary structure comprises 89 residues: Gallinacin-13 (89 aa).

The first 23 residues, 1 to 23 (MRILQLLFAIVVILLLQDAPARG), serve as a signal peptide directing secretion. 3 disulfide bridges follow: Cys-30/Cys-58, Cys-37/Cys-51, and Cys-41/Cys-59. The segment at 66 to 89 (PFSNPKHSVLHTAEQDPSPSLGGT) is disordered.

Belongs to the beta-defensin family. In terms of tissue distribution, expressed in the liver, gall bladder, kidney, small intestine, spleen, testis, ovary and male and female reproductive tracts. Not detected in the ovarian stroma and the theca and granulosa layers of the ovarian follicle.

Its subcellular location is the secreted. It is found in the cytoplasmic granule. Its function is as follows. Has bactericidal activity. Potent activity against E.coli, L.monocytogenes, S.typhimurium and S.pyogenes but mot against S.aureus. Functionally, has bactericidal activity. In Gallus gallus (Chicken), this protein is Gallinacin-13 (GAL13).